Here is an 89-residue protein sequence, read N- to C-terminus: 10 kDa fusion protein (89 aa).

The segment at 1 to 29 is disordered; that stretch reads MDENDGENLLTQPDDTGNSTNGVYAAGAP. Polar residues predominate over residues 9–22; it reads LLTQPDDTGNSTNG. A glycan (N-linked (GlcNAc...) asparagine; by host) is linked at N18.

This sequence belongs to the poxviruses fusion protein family. Homotrimer, covalently linked.

It is found in the virion membrane. The protein is 10 kDa fusion protein of Capra hircus (Goat).